We begin with the raw amino-acid sequence, 231 residues long: Glycerol-3-phosphate acyltransferase (231 aa).

6 helical membrane-spanning segments follow: residues 6 to 26 (FLFLFLFFYILGSIPTGLVIG), 55 to 75 (WGILVFLLDFCKGFVPLTIFL), 95 to 115 (LTMKISLLAISPILGHMFSLF), 130 to 150 (IITSFNPLIGISGIIFFAIFL), 152 to 172 (LFGYASLSSIMASTLVNIFLW), and 196 to 216 (LFYFSINFATLIIIAKHYSNI).

It belongs to the PlsY family. Probably interacts with PlsX.

It is found in the cell membrane. The enzyme catalyses an acyl phosphate + sn-glycerol 3-phosphate = a 1-acyl-sn-glycero-3-phosphate + phosphate. The protein operates within lipid metabolism; phospholipid metabolism. Its function is as follows. Catalyzes the transfer of an acyl group from acyl-phosphate (acyl-PO(4)) to glycerol-3-phosphate (G3P) to form lysophosphatidic acid (LPA). This enzyme utilizes acyl-phosphate as fatty acyl donor, but not acyl-CoA or acyl-ACP. This Aster yellows witches'-broom phytoplasma (strain AYWB) protein is Glycerol-3-phosphate acyltransferase.